We begin with the raw amino-acid sequence, 311 residues long: Ribonuclease Z (311 aa).

7 residues coordinate Zn(2+): His61, His63, Asp65, His66, His148, Asp216, and His275. The Proton acceptor role is filled by Asp65.

Belongs to the RNase Z family. In terms of assembly, homodimer. Zn(2+) is required as a cofactor.

It carries out the reaction Endonucleolytic cleavage of RNA, removing extra 3' nucleotides from tRNA precursor, generating 3' termini of tRNAs. A 3'-hydroxy group is left at the tRNA terminus and a 5'-phosphoryl group is left at the trailer molecule.. In terms of biological role, zinc phosphodiesterase, which displays some tRNA 3'-processing endonuclease activity. Probably involved in tRNA maturation, by removing a 3'-trailer from precursor tRNA. The polypeptide is Ribonuclease Z (Clostridium novyi (strain NT)).